Consider the following 277-residue polypeptide: Large ribosomal subunit protein uL2c (277 aa).

Over residues 1–11 the composition is skewed to polar residues; it reads MNTRSYSTFTP. Disordered regions lie at residues 1–47 and 254–277; these read MNTR…RNNS and YSAL…RRRK.

It belongs to the universal ribosomal protein uL2 family. Part of the 50S ribosomal subunit.

It localises to the plastid. Its subcellular location is the chloroplast. In Cryptomeria japonica (Japanese cedar), this protein is Large ribosomal subunit protein uL2c (rpl2).